Reading from the N-terminus, the 193-residue chain is Potassium-transporting ATPase KdpC subunit (193 aa).

Residues 14 to 34 form a helical membrane-spanning segment; it reads ITFTFLVLCGLVYPLIVTGIA.

The protein belongs to the KdpC family. The system is composed of three essential subunits: KdpA, KdpB and KdpC.

Its subcellular location is the cell membrane. In terms of biological role, part of the high-affinity ATP-driven potassium transport (or Kdp) system, which catalyzes the hydrolysis of ATP coupled with the electrogenic transport of potassium into the cytoplasm. This subunit acts as a catalytic chaperone that increases the ATP-binding affinity of the ATP-hydrolyzing subunit KdpB by the formation of a transient KdpB/KdpC/ATP ternary complex. In Bacillus cereus (strain Q1), this protein is Potassium-transporting ATPase KdpC subunit.